The sequence spans 122 residues: Large ribosomal subunit protein uL14 (122 aa).

Belongs to the universal ribosomal protein uL14 family. In terms of assembly, part of the 50S ribosomal subunit. Forms a cluster with proteins L3 and L19. In the 70S ribosome, L14 and L19 interact and together make contacts with the 16S rRNA in bridges B5 and B8.

Binds to 23S rRNA. Forms part of two intersubunit bridges in the 70S ribosome. The chain is Large ribosomal subunit protein uL14 from Thermotoga petrophila (strain ATCC BAA-488 / DSM 13995 / JCM 10881 / RKU-1).